We begin with the raw amino-acid sequence, 257 residues long: Ribonuclease HII (257 aa).

One can recognise an RNase H type-2 domain in the interval 72–257 (TYIAGIDEVG…FAPIKDMIQK (186 aa)). A divalent metal cation contacts are provided by Asp78, Glu79, and Asp170.

Belongs to the RNase HII family. Requires Mn(2+) as cofactor. It depends on Mg(2+) as a cofactor.

It localises to the cytoplasm. The catalysed reaction is Endonucleolytic cleavage to 5'-phosphomonoester.. Functionally, endonuclease that specifically degrades the RNA of RNA-DNA hybrids. This Bacillus cereus (strain ATCC 14579 / DSM 31 / CCUG 7414 / JCM 2152 / NBRC 15305 / NCIMB 9373 / NCTC 2599 / NRRL B-3711) protein is Ribonuclease HII.